We begin with the raw amino-acid sequence, 376 residues long: Cyclic GMP-AMP synthase-like receptor 1 (376 aa).

Glu-77 and Asp-79 together coordinate Mg(2+).

The protein belongs to the mab-21 family. Requires Mg(2+) as cofactor. Mn(2+) is required as a cofactor.

The catalysed reaction is UTP + ATP = 3',3'-cUAMP + 2 diphosphate. Its function is as follows. Nucleotidyltransferase that catalyzes the formation of cyclic UMP-AMP (3',3'-cUAMP) from ATP and UTP and plays a key role in innate immunity. Acts as a key sensor of double-stranded RNA (dsRNA), the presence of dsRNA in the cytoplasm being a danger signal that triggers the immune responses. Directly binds dsRNA, activating the nucleotidyltransferase activity, leading to synthesis of 3',3'-cUAMP, a second messenger that binds to and activates Sting, thereby triggering the immune response via activation of the NF-kappa-B transcription factor. The sequence is that of Cyclic GMP-AMP synthase-like receptor 1 from Stylophora pistillata (Smooth cauliflower coral).